Reading from the N-terminus, the 44-residue chain is Capsid protein G8P (44 aa).

N-acetylserine; by host is present on serine 1. Residues 1–19 (SGVGDGVDVVSAIEGAAGP) lie on the Periplasmic side of the membrane. The helical transmembrane segment at 20 to 37 (IAAIGGAVLTVMVGIKVY) threads the bilayer. Topologically, residues 38 to 44 (KWVRRAM) are cytoplasmic.

The protein belongs to the inovirus capsid protein family. Homomultimerizes. There are several thousands of this protein in the phage capsid.

The protein localises to the virion. It localises to the host membrane. Its function is as follows. Self assembles to form a helical capsid wrapping up the viral genomic DNA. The capsid displays a filamentous structure with a length of 760-1950 nm and a width of 6-8 nm. The virion assembly and budding take place at the host inner membrane. This chain is Capsid protein G8P (VIII), found in Xanthomonas campestris pv. oryzae (Bacteriophage Xf).